A 490-amino-acid chain; its full sequence is Ent-kaurenoic acid oxidase 1 (490 aa).

The helical transmembrane segment at 6-26 (SWIPVWFPLMVLGCFGLNWLV) threads the bilayer. Position 439 (Cys439) interacts with heme.

This sequence belongs to the cytochrome P450 family. Heme is required as a cofactor. As to expression, widely expressed. Highly expressed in influorescence stem, influorescence, and silique tissue. Weakly expressed in cauline and rosette leaves. Expressed at a higher level in stem and influorescence than AtKAO2/CYP88A4.

The protein resides in the endoplasmic reticulum membrane. The enzyme catalyses ent-kaur-16-en-19-oate + 3 reduced [NADPH--hemoprotein reductase] + 3 O2 = gibberellin A12 + 3 oxidized [NADPH--hemoprotein reductase] + 4 H2O + 4 H(+). The catalysed reaction is ent-kaur-16-en-19-oate + reduced [NADPH--hemoprotein reductase] + O2 = ent-7alpha-hydroxykaur-16-en-19-oate + oxidized [NADPH--hemoprotein reductase] + H2O + H(+). It catalyses the reaction ent-7alpha-hydroxykaur-16-en-19-oate + reduced [NADPH--hemoprotein reductase] + O2 = gibberellin A12 aldehyde + oxidized [NADPH--hemoprotein reductase] + 2 H2O + H(+). It carries out the reaction gibberellin A12 aldehyde + reduced [NADPH--hemoprotein reductase] + O2 = gibberellin A12 + oxidized [NADPH--hemoprotein reductase] + H2O + 2 H(+). Its pathway is plant hormone biosynthesis; gibberellin biosynthesis. Functionally, catalyzes three successive oxidations of ent-kaurenoic acid giving gibberellin 12 (GA12), a key step in gibberellins (GAs) biosynthesis. GAs, which are involved many processes, including stem elongation, play a central role in plant development. The sequence is that of Ent-kaurenoic acid oxidase 1 from Arabidopsis thaliana (Mouse-ear cress).